Reading from the N-terminus, the 310-residue chain is Small ribosomal subunit biogenesis GTPase RsgA (310 aa).

The region spanning 77–236 (KNELKRPNIA…IADTPGFSKL (160 aa)) is the CP-type G domain. GTP-binding positions include 126-129 (SKID) and 179-187 (GQTGVGKST). The Zn(2+) site is built by Cys260, Cys266, His268, and Cys274.

It belongs to the TRAFAC class YlqF/YawG GTPase family. RsgA subfamily. Monomer. Associates with 30S ribosomal subunit, binds 16S rRNA. The cofactor is Zn(2+).

It is found in the cytoplasm. In terms of biological role, one of several proteins that assist in the late maturation steps of the functional core of the 30S ribosomal subunit. Helps release RbfA from mature subunits. May play a role in the assembly of ribosomal proteins into the subunit. Circularly permuted GTPase that catalyzes slow GTP hydrolysis, GTPase activity is stimulated by the 30S ribosomal subunit. This is Small ribosomal subunit biogenesis GTPase RsgA from Phytoplasma australiense.